Here is a 614-residue protein sequence, read N- to C-terminus: Dolichyl-diphosphooligosaccharide--protein glycosyltransferase subunit 1A (614 aa).

The signal sequence occupies residues 1 to 25 (MKQSSVVDLLLLLLAIALLATPAFS). The Lumenal portion of the chain corresponds to 26-432 (DLVLSKVERR…QVYYKFSNIN (407 aa)). N-linked (GlcNAc...) asparagine glycans are attached at residues Asn94 and Asn299. A Glycyl lysine isopeptide (Lys-Gly) (interchain with G-Cter in ubiquitin) cross-link involves residue Lys311. Residue Asn352 is glycosylated (N-linked (GlcNAc...) asparagine). The chain crosses the membrane as a helical span at residues 433-453 (LLSEPLMLISGFFILFITCII). Residues 454–614 (YTRADISISK…EDLLEFIDEI (161 aa)) are Cytoplasmic-facing.

The protein belongs to the OST1 family. In terms of assembly, component of the oligosaccharyltransferase (OST) complex.

The protein localises to the endoplasmic reticulum membrane. Its pathway is protein modification; protein glycosylation. Its function is as follows. Subunit of the oligosaccharyl transferase (OST) complex that catalyzes the initial transfer of a defined glycan (Glc(3)Man(9)GlcNAc(2) in eukaryotes) from the lipid carrier dolichol-pyrophosphate to an asparagine residue within an Asn-X-Ser/Thr consensus motif in nascent polypeptide chains, the first step in protein N-glycosylation. N-glycosylation occurs cotranslationally and the complex associates with the Sec61 complex at the channel-forming translocon complex that mediates protein translocation across the endoplasmic reticulum (ER). All subunits are required for a maximal enzyme activity. The chain is Dolichyl-diphosphooligosaccharide--protein glycosyltransferase subunit 1A (OST1A) from Arabidopsis thaliana (Mouse-ear cress).